The chain runs to 569 residues: Urease subunit alpha (569 aa).

Residues 131–569 (GAIDSHIHFI…LPLAQRYLLL (439 aa)) enclose the Urease domain. Ni(2+)-binding residues include H136, H138, and K219. The residue at position 219 (K219) is an N6-carboxylysine. Residue H221 coordinates substrate. Ni(2+) contacts are provided by H248 and H274. H322 acts as the Proton donor in catalysis. D362 is a Ni(2+) binding site.

The protein belongs to the metallo-dependent hydrolases superfamily. Urease alpha subunit family. In terms of assembly, heterotrimer of UreA (gamma), UreB (beta) and UreC (alpha) subunits. Three heterotrimers associate to form the active enzyme. The cofactor is Ni cation. Post-translationally, carboxylation allows a single lysine to coordinate two nickel ions.

The protein localises to the cytoplasm. The catalysed reaction is urea + 2 H2O + H(+) = hydrogencarbonate + 2 NH4(+). The protein operates within nitrogen metabolism; urea degradation; CO(2) and NH(3) from urea (urease route): step 1/1. The sequence is that of Urease subunit alpha from Prochlorococcus marinus (strain NATL2A).